Here is a 700-residue protein sequence, read N- to C-terminus: Chondroitinase-AC (700 aa).

The N-terminal stretch at 1-22 (MKKLFVTCIVFFSILSPALLIA) is a signal peptide. Active-site residues include His-225, Tyr-234, and Arg-288. O-linked (Man...) serine glycosylation occurs at Ser-328. Residues Glu-405, Asp-407, Asp-416, and Tyr-417 each contribute to the Ca(2+) site. Ser-455 carries an O-linked (Man...) serine glycan.

Belongs to the polysaccharide lyase 8 family. As to quaternary structure, monomer. Ca(2+) is required as a cofactor.

It catalyses the reaction Eliminative degradation of polysaccharides containing 1,4-beta-D-hexosaminyl and 1,3-beta-D-glucuronosyl linkages to disaccharides containing 4-deoxy-beta-D-gluc-4-enuronosyl groups.. In Pedobacter heparinus (strain ATCC 13125 / DSM 2366 / CIP 104194 / JCM 7457 / NBRC 12017 / NCIMB 9290 / NRRL B-14731 / HIM 762-3), this protein is Chondroitinase-AC (cslA).